The following is a 663-amino-acid chain: Ankyrin repeat and SAM domain-containing protein 3 (663 aa).

Positions 1–421 (MSELSDEASE…PGSEPQAEKS (421 aa)) are interaction with NEK7. Phosphoserine is present on residues Ser-2 and Ser-5. ANK repeat units lie at residues 34–64 (DVPL…DLNK), 68–97 (GGWT…SVNV), 101–130 (EGQT…ELEM), 134–163 (QGWT…NANV), 168–197 (YGFT…KVDT), and 201–220 (SGAT…IVAL). At Asn-96 the chain carries 3-hydroxyasparagine. Ser-201, Ser-225, Ser-243, Ser-244, and Ser-245 each carry phosphoserine. Disordered regions lie at residues 242–261 (LSSS…CRKK) and 278–425 (TGLG…PYSG). A Phosphothreonine modification is found at Thr-318. Position 319 is a phosphoserine (Ser-319). The segment covering 322–337 (NERDVESSSSSSREEP) has biased composition (basic and acidic residues). Ser-366, Ser-369, and Ser-373 each carry phosphoserine. The span at 378–395 (KSSVRKQTRTYLKNKSRH) shows a compositional bias: basic residues. The SAM domain occupies 424 to 487 (SGPQDLATLL…TSAIARWHSS (64 aa)). A coiled-coil region spans residues 500–575 (ADRLEAEMQE…AALVLDQLRA (76 aa)). Ser-540 is modified (phosphoserine). Disordered stretches follow at residues 585–604 (KQHH…PADS) and 637–663 (AEPG…SDVG). Acidic residues predominate over residues 641–651 (ETTDAEWEEME). Positions 654 to 663 (IARRDDSDVG) are enriched in basic and acidic residues.

Homooligomer. Interacts (via SAM domain) with ANKS6 (via SAM domain). Interacts with BICC1. Interacts with NPHP1. Interacts with NEK8. Interacts with HIF1AN. Interacts with NEK7; this interaction alters the subcellular distribution of NEK7 by preventing its nuclear translocation. In terms of processing, hydroxylated at Asn-96, most probably by HIF1AN. Phosphorylations at Ser-5, Ser-225, Thr-318, Ser-319, Ser-366 and Ser-369 occur in a NEK7-dependent manner. Post-translationally, polyubiquitinated.

The protein localises to the cell projection. It is found in the cilium. It localises to the cytoplasm. Functionally, may be involved in vasopressin signaling in the kidney. The polypeptide is Ankyrin repeat and SAM domain-containing protein 3 (Anks3) (Rattus norvegicus (Rat)).